A 649-amino-acid chain; its full sequence is Glucan endo-1,3-beta-glucosidase btgC (649 aa).

Disordered stretches follow at residues 1–50 (MGDR…AHTH) and 110–224 (YHTT…AGGA). The Cytoplasmic segment spans residues 1–274 (MGDRSEQYGD…PRPSGASRKR (274 aa)). A compositionally biased stretch (low complexity) spans 144–157 (GSSAALSAAGAPAG). The segment covering 198–208 (NPDDILDDGDD) has biased composition (acidic residues). Residues 275-295 (GWIIGGILAFIVIGAIVGGAV) traverse the membrane as a helical; Signal-anchor for type II membrane protein segment. Topologically, residues 296–649 (GGTLGNRRSE…IPDCGGKTAA (354 aa)) are extracellular. Residues 301–329 (NRRSETASESSEVSADDDTETNGDLDKNS) are disordered. A compositionally biased stretch (acidic residues) spans 314-323 (SADDDTETNG). Asn-369, Asn-392, and Asn-420 each carry an N-linked (GlcNAc...) asparagine glycan. Glu-452 acts as the Proton donor in catalysis. Glu-551 functions as the Nucleophile in the catalytic mechanism. A glycan (N-linked (GlcNAc...) asparagine) is linked at Asn-596.

The protein belongs to the glycosyl hydrolase 17 family.

It localises to the cell membrane. It catalyses the reaction Hydrolysis of (1-&gt;3)-beta-D-glucosidic linkages in (1-&gt;3)-beta-D-glucans.. Functionally, glucanases play a role in cell expansion during growth, in cell-cell fusion during mating, and in spore release during sporulation. This enzyme may be involved in beta-glucan degradation. Active on laminarin and lichenan. This Emericella nidulans (strain FGSC A4 / ATCC 38163 / CBS 112.46 / NRRL 194 / M139) (Aspergillus nidulans) protein is Glucan endo-1,3-beta-glucosidase btgC (btgC).